The sequence spans 644 residues: Chaperone protein DnaK (644 aa).

Position 199 is a phosphothreonine; by autocatalysis (Thr-199). The tract at residues 603-644 is disordered; it reads YAKKSSEGQAAQGQTQSQESTKPAEEGVVDAEFEEVKEEDKK. Residues 609-623 are compositionally biased toward polar residues; the sequence is EGQAAQGQTQSQEST. A compositionally biased stretch (acidic residues) spans 629–644; the sequence is GVVDAEFEEVKEEDKK.

This sequence belongs to the heat shock protein 70 family.

Acts as a chaperone. This Legionella pneumophila (strain Corby) protein is Chaperone protein DnaK.